Reading from the N-terminus, the 466-residue chain is Asparagine--tRNA ligase (466 aa).

The protein belongs to the class-II aminoacyl-tRNA synthetase family. Homodimer.

It localises to the cytoplasm. It catalyses the reaction tRNA(Asn) + L-asparagine + ATP = L-asparaginyl-tRNA(Asn) + AMP + diphosphate + H(+). This is Asparagine--tRNA ligase from Shewanella halifaxensis (strain HAW-EB4).